The following is a 296-amino-acid chain: NAD kinase (296 aa).

Asp74 acts as the Proton acceptor in catalysis. Residues 74 to 75 (DG), 148 to 149 (ND), Arg176, Asp178, and 189 to 194 (TAYALS) each bind NAD(+).

It belongs to the NAD kinase family. The cofactor is a divalent metal cation.

It localises to the cytoplasm. It carries out the reaction NAD(+) + ATP = ADP + NADP(+) + H(+). Its function is as follows. Involved in the regulation of the intracellular balance of NAD and NADP, and is a key enzyme in the biosynthesis of NADP. Catalyzes specifically the phosphorylation on 2'-hydroxyl of the adenosine moiety of NAD to yield NADP. This Nitrosomonas europaea (strain ATCC 19718 / CIP 103999 / KCTC 2705 / NBRC 14298) protein is NAD kinase.